Here is a 398-residue protein sequence, read N- to C-terminus: Riboflavin biosynthesis protein RibBA (398 aa).

Residues 1–199 (MFHPIEEALE…IKDLIEYRYN (199 aa)) are DHBP synthase. D-ribulose 5-phosphate contacts are provided by residues 26-27 (RE), Asp31, 138-142 (RAGHT), and Glu162. Glu27 is a binding site for Mg(2+). Mg(2+) is bound at residue His141. Positions 200 to 398 (ITTLVNREVD…MKKLGHLLHF (199 aa)) are GTP cyclohydrolase II. Residue 251–255 (RVHSE) participates in GTP binding. 3 residues coordinate Zn(2+): Cys256, Cys267, and Cys269. GTP contacts are provided by residues Gln272, 294-296 (EGR), and Thr316. Catalysis depends on Asp328, which acts as the Proton acceptor; for GTP cyclohydrolase activity. Arg330 (nucleophile; for GTP cyclohydrolase activity) is an active-site residue. Residues Thr351 and Lys356 each coordinate GTP.

The protein in the N-terminal section; belongs to the DHBP synthase family. It in the C-terminal section; belongs to the GTP cyclohydrolase II family. It depends on Mg(2+) as a cofactor. Requires Mn(2+) as cofactor. Zn(2+) is required as a cofactor.

It catalyses the reaction D-ribulose 5-phosphate = (2S)-2-hydroxy-3-oxobutyl phosphate + formate + H(+). The enzyme catalyses GTP + 4 H2O = 2,5-diamino-6-hydroxy-4-(5-phosphoribosylamino)-pyrimidine + formate + 2 phosphate + 3 H(+). It functions in the pathway cofactor biosynthesis; riboflavin biosynthesis; 2-hydroxy-3-oxobutyl phosphate from D-ribulose 5-phosphate: step 1/1. The protein operates within cofactor biosynthesis; riboflavin biosynthesis; 5-amino-6-(D-ribitylamino)uracil from GTP: step 1/4. Its function is as follows. Catalyzes the conversion of D-ribulose 5-phosphate to formate and 3,4-dihydroxy-2-butanone 4-phosphate. Functionally, catalyzes the conversion of GTP to 2,5-diamino-6-ribosylamino-4(3H)-pyrimidinone 5'-phosphate (DARP), formate and pyrophosphate. The polypeptide is Riboflavin biosynthesis protein RibBA (Bacillus velezensis (strain DSM 23117 / BGSC 10A6 / LMG 26770 / FZB42) (Bacillus amyloliquefaciens subsp. plantarum)).